Reading from the N-terminus, the 200-residue chain is Recombination protein RecR (200 aa).

A C4-type zinc finger spans residues 58-73; it reads CEVCHNLAEEGLCAIC. The Toprim domain maps to 81-176; that stretch reads GLICVVEEPV…DISRLAYGMP (96 aa).

Belongs to the RecR family.

In terms of biological role, may play a role in DNA repair. It seems to be involved in an RecBC-independent recombinational process of DNA repair. It may act with RecF and RecO. This Magnetococcus marinus (strain ATCC BAA-1437 / JCM 17883 / MC-1) protein is Recombination protein RecR.